Here is a 436-residue protein sequence, read N- to C-terminus: MSETYVSEKSPGVMASGAELIRAADIQTAQARISSVIAPTPLQYCPRLSEETGAEIYLKREDLQDVRSYKIRGALNSGAQLTQEQRDAGIVAASAGNHAQGVAYVCKSLGVQGRIYVPVQTPKQKRDRIMVHGGEFVSLVVTGNNFDEASAAAHEDAERTGATLIEPFDARNTVIGQGTVAAEILSQLTSMGKSADHVMVPVGGGGLLAGVVSYMADMAPRTAIVGIEPAGAASMQAALHNGGPITLETVDPFVDGAAVKRVGDLNYTIVEKNQGRVHMMSATEGAVCTEMLDLYQNEGIIAEPAGALSIAGLKEMSFAPGSVVVCIISGGNNDVLRYAEIAERSLVHRGLKHYFLVNFPQKPGQLRHFLEDILGPDDDITLFEYLKRNNRETGTALVGIHLSEASGLDSLLERMEESAIDSRRLEPGTPEYEYLT.

Positions 1 to 357 (MSETYVSEKS…HRGLKHYFLV (357 aa)) are catalytic. At Lys-70 the chain carries N6-(pyridoxal phosphate)lysine. Residues Asn-97, 203–207 (GGGGL), and Ser-329 contribute to the pyridoxal 5'-phosphate site. The ACT-like domain maps to 353-427 (HYFLVNFPQK…SAIDSRRLEP (75 aa)). Residues 358-436 (NFPQKPGQLR…PGTPEYEYLT (79 aa)) are regulatory.

This sequence belongs to the serine/threonine dehydratase family. In terms of assembly, homotetramer. The cofactor is pyridoxal 5'-phosphate.

It carries out the reaction L-threonine = 2-oxobutanoate + NH4(+). It participates in amino-acid biosynthesis; L-isoleucine biosynthesis; 2-oxobutanoate from L-threonine: step 1/1. Its function is as follows. Catalyzes the anaerobic formation of alpha-ketobutyrate and ammonia from threonine in a two-step reaction. The first step involved a dehydration of threonine and a production of enamine intermediates (aminocrotonate), which tautomerizes to its imine form (iminobutyrate). Both intermediates are unstable and short-lived. The second step is the nonenzymatic hydrolysis of the enamine/imine intermediates to form 2-ketobutyrate and free ammonia. In the low water environment of the cell, the second step is accelerated by RidA. The chain is L-threonine dehydratase biosynthetic IlvA (ilvA) from Corynebacterium glutamicum (strain ATCC 13032 / DSM 20300 / JCM 1318 / BCRC 11384 / CCUG 27702 / LMG 3730 / NBRC 12168 / NCIMB 10025 / NRRL B-2784 / 534).